A 576-amino-acid polypeptide reads, in one-letter code: MDEMVLLTQEWLNETYKGKSGYNSIEENGKTGWKTMYALTRALQLELGITQTSDSFGPTTLRKLKELGPISTSTNSKKNIVKIIQGALYCKGYGPGGLTGTFGQGTKEAIAEMQLHMGLSKTDGVVTPKVFKALLNMDSYILLNGASEKVRSIQQWLNNKYYNRENFYFMPCDGLYSRDTQKSLVYAIQYEEGLSDSIANGNFGPTTQRLIPVLRIGETDEKNSFIHLFQAALIFNGYNVPFDGVYSESVRSKVKAFQSFAKLQQSGTADFQTWASLLVSTGDPNRKGVACDSITQITSDRAESLKRAGYKIVGRYLTNAPGSTLNKKIQPGELETILKSGLNVFPIYQTYGGATNYFNKEQGKKDAFAAYKAAKEYGFKNNTVIYFAVDYDAYGNDLNNNIIPHFEGINEIMNGFLGSTYKIGIYAPRNVCTIVSKKGLAFASFVSGMSTGFSGNLGYPLPYNWAFDQISTITVGNGSGMIEIDNDICSGLDNGVNTINIVPSENKKFFDQIDVLYETAEKYAQMQSDLNNGVKKTQLANELVAQYLRKDDYKGWKWVPTAGQIDPIYREWAVKR.

The protein belongs to the FadG family.

This is an uncharacterized protein from Bacillus subtilis (strain 168).